The primary structure comprises 300 residues: Ribonuclease HIII (300 aa).

The RNase H type-2 domain maps to 83–300 (IPIIGSDEVG…THKAQALLTK (218 aa)). 3 residues coordinate a divalent metal cation: Asp89, Glu90, and Asp194.

This sequence belongs to the RNase HII family. RnhC subfamily. The cofactor is Mn(2+). It depends on Mg(2+) as a cofactor.

It is found in the cytoplasm. It catalyses the reaction Endonucleolytic cleavage to 5'-phosphomonoester.. Functionally, endonuclease that specifically degrades the RNA of RNA-DNA hybrids. In Streptococcus pyogenes serotype M5 (strain Manfredo), this protein is Ribonuclease HIII.